A 476-amino-acid chain; its full sequence is Glutamate--tRNA ligase (476 aa).

The 'HIGH' region motif lies at 9 to 19 (PSPTGLFHIGT). A 'KMSKS' region motif is present at residues 248 to 252 (KLSKR). An ATP-binding site is contributed by lysine 251.

This sequence belongs to the class-I aminoacyl-tRNA synthetase family. Glutamate--tRNA ligase type 1 subfamily. Monomer.

The protein resides in the cytoplasm. It carries out the reaction tRNA(Glu) + L-glutamate + ATP = L-glutamyl-tRNA(Glu) + AMP + diphosphate. In terms of biological role, catalyzes the attachment of glutamate to tRNA(Glu) in a two-step reaction: glutamate is first activated by ATP to form Glu-AMP and then transferred to the acceptor end of tRNA(Glu). The chain is Glutamate--tRNA ligase from Prochlorococcus marinus (strain AS9601).